The following is a 364-amino-acid chain: Dihydroorotate dehydrogenase (quinone) (364 aa).

FMN contacts are provided by residues Ala62–Lys66 and Thr86. Lys66 serves as a coordination point for substrate. Asn111–Phe115 contributes to the substrate binding site. Asn142 and Asn175 together coordinate FMN. Residue Asn175 coordinates substrate. The Nucleophile role is filled by Ser178. Asn180 lines the substrate pocket. 2 residues coordinate FMN: Lys216 and Thr244. Residue Asn245–Thr246 participates in substrate binding. FMN-binding positions include Gly267, Gly296, and Tyr317 to Thr318.

The protein belongs to the dihydroorotate dehydrogenase family. Type 2 subfamily. Monomer. FMN serves as cofactor.

The protein localises to the cell membrane. It carries out the reaction (S)-dihydroorotate + a quinone = orotate + a quinol. It participates in pyrimidine metabolism; UMP biosynthesis via de novo pathway; orotate from (S)-dihydroorotate (quinone route): step 1/1. Functionally, catalyzes the conversion of dihydroorotate to orotate with quinone as electron acceptor. This Anaeromyxobacter dehalogenans (strain 2CP-1 / ATCC BAA-258) protein is Dihydroorotate dehydrogenase (quinone).